The sequence spans 535 residues: Arylsulfatase K (535 aa).

Residues Met1–Cys21 form the signal peptide. Asp41 and Cys81 together coordinate Ca(2+). The active-site Nucleophile is Cys81. Cys81 is modified (3-oxoalanine (Cys)). Residue Lys129 participates in substrate binding. Asn194 is a glycosylation site (N-linked (GlcNAc...) asparagine). His252 serves as a coordination point for substrate. N-linked (GlcNAc...) asparagine glycosylation occurs at Asn263. Residues Asp314 and His315 each coordinate Ca(2+). Residues Asn376, Asn414, and Asn499 are each glycosylated (N-linked (GlcNAc...) asparagine).

Belongs to the sulfatase family. It depends on Ca(2+) as a cofactor. In terms of processing, the conversion to 3-oxoalanine (also known as C-formylglycine, FGly), of a serine or cysteine residue in prokaryotes and of a cysteine residue in eukaryotes, is critical for catalytic activity.

The protein localises to the secreted. Its subcellular location is the lysosome. It catalyses the reaction an aryl sulfate + H2O = a phenol + sulfate + H(+). The catalysed reaction is Hydrolysis of the 2-sulfate groups of the 2-O-sulfo-D-glucuronate residues of chondroitin sulfate, heparin and heparitin sulfate.. Its function is as follows. Catalyzes the hydrolysis of pseudosubstrates such as p-nitrocatechol sulfate and p-nitrophenyl sulfate. Catalyzes the hydrolysis of the 2-sulfate groups of the 2-O-sulfo-D-glucuronate residues of chondroitin sulfate, heparin and heparitin sulfate. Acts selectively on 2-sulfoglucuronate and lacks activity against 2-sulfoiduronate. This chain is Arylsulfatase K (ARSK), found in Gallus gallus (Chicken).